We begin with the raw amino-acid sequence, 334 residues long: tRNA N6-adenosine threonylcarbamoyltransferase (334 aa).

Positions 107 and 111 each coordinate Fe cation. Residues 129–133 (LVSGG), aspartate 162, glycine 175, and asparagine 269 each bind substrate. Aspartate 297 serves as a coordination point for Fe cation.

This sequence belongs to the KAE1 / TsaD family. Requires Fe(2+) as cofactor.

It is found in the cytoplasm. The catalysed reaction is L-threonylcarbamoyladenylate + adenosine(37) in tRNA = N(6)-L-threonylcarbamoyladenosine(37) in tRNA + AMP + H(+). Required for the formation of a threonylcarbamoyl group on adenosine at position 37 (t(6)A37) in tRNAs that read codons beginning with adenine. Is involved in the transfer of the threonylcarbamoyl moiety of threonylcarbamoyl-AMP (TC-AMP) to the N6 group of A37, together with TsaE and TsaB. TsaD likely plays a direct catalytic role in this reaction. This is tRNA N6-adenosine threonylcarbamoyltransferase from Campylobacter concisus (strain 13826).